Consider the following 175-residue polypeptide: Adenine phosphoribosyltransferase (175 aa).

Belongs to the purine/pyrimidine phosphoribosyltransferase family. In terms of assembly, homodimer.

It is found in the cytoplasm. It catalyses the reaction AMP + diphosphate = 5-phospho-alpha-D-ribose 1-diphosphate + adenine. It participates in purine metabolism; AMP biosynthesis via salvage pathway; AMP from adenine: step 1/1. Catalyzes a salvage reaction resulting in the formation of AMP, that is energically less costly than de novo synthesis. The protein is Adenine phosphoribosyltransferase of Lactobacillus acidophilus (strain ATCC 700396 / NCK56 / N2 / NCFM).